A 460-amino-acid polypeptide reads, in one-letter code: Bifunctional protein GlmU (460 aa).

Positions 1-232 (MALNVVILAA…AIEVEGANNR (232 aa)) are pyrophosphorylase. UDP-N-acetyl-alpha-D-glucosamine contacts are provided by residues 8 to 11 (LAAG), K22, Q73, 78 to 79 (GT), 100 to 102 (YGD), G137, E157, N172, and N230. Residue D102 participates in Mg(2+) binding. Mg(2+) is bound at residue N230. The tract at residues 233–253 (VQLAQLERAYQAREAEKLMLA) is linker. Residues 254-460 (GANLRDPSRI…GWQRPVKIKK (207 aa)) form an N-acetyltransferase region. UDP-N-acetyl-alpha-D-glucosamine-binding residues include R336 and K354. H366 acts as the Proton acceptor in catalysis. Residues Y369 and N380 each coordinate UDP-N-acetyl-alpha-D-glucosamine. Acetyl-CoA-binding positions include A383, 389–390 (NY), S408, A426, and R443.

This sequence in the N-terminal section; belongs to the N-acetylglucosamine-1-phosphate uridyltransferase family. In the C-terminal section; belongs to the transferase hexapeptide repeat family. Homotrimer. It depends on Mg(2+) as a cofactor.

The protein resides in the cytoplasm. The catalysed reaction is alpha-D-glucosamine 1-phosphate + acetyl-CoA = N-acetyl-alpha-D-glucosamine 1-phosphate + CoA + H(+). It carries out the reaction N-acetyl-alpha-D-glucosamine 1-phosphate + UTP + H(+) = UDP-N-acetyl-alpha-D-glucosamine + diphosphate. It functions in the pathway nucleotide-sugar biosynthesis; UDP-N-acetyl-alpha-D-glucosamine biosynthesis; N-acetyl-alpha-D-glucosamine 1-phosphate from alpha-D-glucosamine 6-phosphate (route II): step 2/2. Its pathway is nucleotide-sugar biosynthesis; UDP-N-acetyl-alpha-D-glucosamine biosynthesis; UDP-N-acetyl-alpha-D-glucosamine from N-acetyl-alpha-D-glucosamine 1-phosphate: step 1/1. It participates in bacterial outer membrane biogenesis; LPS lipid A biosynthesis. Functionally, catalyzes the last two sequential reactions in the de novo biosynthetic pathway for UDP-N-acetylglucosamine (UDP-GlcNAc). The C-terminal domain catalyzes the transfer of acetyl group from acetyl coenzyme A to glucosamine-1-phosphate (GlcN-1-P) to produce N-acetylglucosamine-1-phosphate (GlcNAc-1-P), which is converted into UDP-GlcNAc by the transfer of uridine 5-monophosphate (from uridine 5-triphosphate), a reaction catalyzed by the N-terminal domain. The protein is Bifunctional protein GlmU of Shewanella baltica (strain OS223).